A 246-amino-acid chain; its full sequence is Salivary antigen SP32 (246 aa).

The first 23 residues, M1–S23, serve as a signal peptide directing secretion. The segment at D51 to P160 is disordered. Residues V65 to R78 are compositionally biased toward basic and acidic residues. Over residues Q79–R124 the composition is skewed to polar residues. Residues Q141–K155 are compositionally biased toward basic and acidic residues.

In terms of assembly, interacts with human DSG1. Interacts with human DSG3. Salivary gland (at protein level).

It is found in the secreted. In terms of biological role, down-regulates the expression of CD86 and HLA-DR on the surface of lipopolysaccharide (LPS)-stimulated human peripheral blood mononuclear cells (PBMCs). Reduces LPS-induced secretion of IL-1beta/IL1B in human PBMCs. Reduces LPS-induced secretion of various cytokines, such as IL-1beta, TNF-alpha/TNF, MCP-1/CCL2, IL6, IL27 and IL-1alpha/IL1A, in host cultured macrophages probably via inhibition of NF-kappa-B signaling pathway. Reduces production of IFN-gamma/IFNG, IL4 and IL6 in human lymphocytes activated with PMA/ionomycin. Exhibits anti-inflammatory activity in carrageenan-induced paw edema model in rats. This is Salivary antigen SP32 from Phlebotomus papatasi (Sandfly).